Consider the following 63-residue polypeptide: MAVPARHTSKQKKRSRRAHLKLSVPAMHYDATTGEYRLSHRVSPKGYYKGRQVVSENSASDND.

Belongs to the bacterial ribosomal protein bL32 family.

In Lactobacillus delbrueckii subsp. bulgaricus (strain ATCC 11842 / DSM 20081 / BCRC 10696 / JCM 1002 / NBRC 13953 / NCIMB 11778 / NCTC 12712 / WDCM 00102 / Lb 14), this protein is Large ribosomal subunit protein bL32.